The sequence spans 310 residues: Protoheme IX farnesyltransferase (310 aa).

9 helical membrane passes run 26-46, 47-67, 95-115, 118-138, 147-167, 174-194, 220-240, 243-263, and 281-301; these read VMSL…ATVH, PMIA…SGAL, GEAL…LGLA, LFAA…YSMW, IVIG…VATG, LFMF…LALF, VLAY…TGIG, LYLV…VRIW, and FFRF…AEAA.

This sequence belongs to the UbiA prenyltransferase family. Protoheme IX farnesyltransferase subfamily. As to quaternary structure, interacts with CtaA.

It is found in the cell inner membrane. It carries out the reaction heme b + (2E,6E)-farnesyl diphosphate + H2O = Fe(II)-heme o + diphosphate. It functions in the pathway porphyrin-containing compound metabolism; heme O biosynthesis; heme O from protoheme: step 1/1. Functionally, converts heme B (protoheme IX) to heme O by substitution of the vinyl group on carbon 2 of heme B porphyrin ring with a hydroxyethyl farnesyl side group. The protein is Protoheme IX farnesyltransferase of Cereibacter sphaeroides (strain ATCC 17025 / ATH 2.4.3) (Rhodobacter sphaeroides).